Consider the following 217-residue polypeptide: Pyridoxine/pyridoxamine 5'-phosphate oxidase (217 aa).

Substrate is bound by residues 13-16 (RREY) and K71. FMN contacts are provided by residues 66 to 71 (RIVLLK), 81 to 82 (YT), R87, K88, and Q110. Substrate-binding residues include Y128, R132, and S136. Residues 145 to 146 (QS) and W190 each bind FMN. 196-198 (RLH) is a substrate binding site. R200 contacts FMN.

This sequence belongs to the pyridoxamine 5'-phosphate oxidase family. Homodimer. It depends on FMN as a cofactor.

The enzyme catalyses pyridoxamine 5'-phosphate + O2 + H2O = pyridoxal 5'-phosphate + H2O2 + NH4(+). It catalyses the reaction pyridoxine 5'-phosphate + O2 = pyridoxal 5'-phosphate + H2O2. The protein operates within cofactor metabolism; pyridoxal 5'-phosphate salvage; pyridoxal 5'-phosphate from pyridoxamine 5'-phosphate: step 1/1. It participates in cofactor metabolism; pyridoxal 5'-phosphate salvage; pyridoxal 5'-phosphate from pyridoxine 5'-phosphate: step 1/1. Functionally, catalyzes the oxidation of either pyridoxine 5'-phosphate (PNP) or pyridoxamine 5'-phosphate (PMP) into pyridoxal 5'-phosphate (PLP). This is Pyridoxine/pyridoxamine 5'-phosphate oxidase from Photorhabdus laumondii subsp. laumondii (strain DSM 15139 / CIP 105565 / TT01) (Photorhabdus luminescens subsp. laumondii).